The chain runs to 504 residues: Sugar transport protein 14 (504 aa).

The Cytoplasmic portion of the chain corresponds to 1-25; the sequence is MAGGALTDEGGLKRAHLYEHRITSY. 12 consecutive transmembrane segments (helical) span residues 26 to 46, 84 to 104, 121 to 141, 144 to 164, 171 to 191, 205 to 225, 286 to 308, 315 to 337, 352 to 372, 382 to 402, 428 to 448, and 454 to 474; these read FIFACIVGSMGGSLFGYDLGV, ILTLFTSSLYFAGLISTFGAS, VSFFLGGVINAAAKNILMLIL, IFLGIGIGFGNQAVPLYLSEM, GTVNQLFQLTTCIGILVANLI, LSLGLATVPAILMFLGGLVLP, LVIGAIGLPAFQQLTGMNSILFY, SLGFGGSASLISSTITNAALVVA, FLLLEASVEMFCYMVVVGVTL, LPKSLGLILVVLICLFVLAYG, VVVCVNLFFTALIAQCFLVSL, and GIFLLFAGLILGMGSFVYFLL. Residues 475-504 lie on the Cytoplasmic side of the membrane; that stretch reads PETKQVPIEEVYLLWRQHWLWKKYVEDVDE.

Belongs to the major facilitator superfamily. Sugar transporter (TC 2.A.1.1) family.

Its subcellular location is the membrane. Mediates an active uptake of hexoses, probably by sugar/hydrogen symport. This is Sugar transport protein 14 (STP14) from Arabidopsis thaliana (Mouse-ear cress).